We begin with the raw amino-acid sequence, 139 residues long: Large-conductance mechanosensitive channel (139 aa).

A run of 2 helical transmembrane segments spans residues 9–29 (AFAV…GAAF) and 79–99 (IQTV…VKAI).

It belongs to the MscL family. Homopentamer.

The protein localises to the cell inner membrane. In terms of biological role, channel that opens in response to stretch forces in the membrane lipid bilayer. May participate in the regulation of osmotic pressure changes within the cell. The chain is Large-conductance mechanosensitive channel from Pseudomonas putida (strain ATCC 47054 / DSM 6125 / CFBP 8728 / NCIMB 11950 / KT2440).